The following is a 902-amino-acid chain: Translation initiation factor IF-2 (902 aa).

2 stretches are compositionally biased toward basic and acidic residues: residues 1 to 12 (MVDTKTPGDKKL) and 43 to 60 (VVEKRGKRRIGDGPEPHA). The interval 1 to 276 (MVDTKTPGDK…KPGPQKERGR (276 aa)) is disordered. Residues 69–84 (PAAPAPSRPAPPPAPP) show a composition bias toward pro residues. The span at 111-174 (AKLREVEERR…ETEAKKRFGE (64 aa)) shows a compositional bias: basic and acidic residues. Low complexity-rich tracts occupy residues 181-190 (AARPATAAPA) and 198-237 (APAARPGTTTTRPGTTTARPATTTAQRPGAPAGRGPAVAA). The tr-type G domain maps to 398-567 (TRSPVVTVMG…MIALQADILD (170 aa)). The G1 stretch occupies residues 407–414 (GHVDHGKT). Residue 407–414 (GHVDHGKT) participates in GTP binding. Residues 432–436 (GITQH) are G2. The G3 stretch occupies residues 455 to 458 (DTPG). GTP contacts are provided by residues 455-459 (DTPGH) and 509-512 (NKID). The interval 509 to 512 (NKID) is G4. Residues 545–547 (SAK) form a G5 region.

Belongs to the TRAFAC class translation factor GTPase superfamily. Classic translation factor GTPase family. IF-2 subfamily.

It localises to the cytoplasm. Functionally, one of the essential components for the initiation of protein synthesis. Protects formylmethionyl-tRNA from spontaneous hydrolysis and promotes its binding to the 30S ribosomal subunits. Also involved in the hydrolysis of GTP during the formation of the 70S ribosomal complex. The polypeptide is Translation initiation factor IF-2 (Bradyrhizobium diazoefficiens (strain JCM 10833 / BCRC 13528 / IAM 13628 / NBRC 14792 / USDA 110)).